Consider the following 229-residue polypeptide: Protein GrpE (229 aa).

A disordered region spans residues Met1–Gly89. Positions Ala24–Asp36 are enriched in low complexity. Residues Glu39–Ala50 show a composition bias toward basic and acidic residues. A compositionally biased stretch (low complexity) spans Lys65–Ser84.

Belongs to the GrpE family. As to quaternary structure, homodimer.

The protein resides in the cytoplasm. In terms of biological role, participates actively in the response to hyperosmotic and heat shock by preventing the aggregation of stress-denatured proteins, in association with DnaK and GrpE. It is the nucleotide exchange factor for DnaK and may function as a thermosensor. Unfolded proteins bind initially to DnaJ; upon interaction with the DnaJ-bound protein, DnaK hydrolyzes its bound ATP, resulting in the formation of a stable complex. GrpE releases ADP from DnaK; ATP binding to DnaK triggers the release of the substrate protein, thus completing the reaction cycle. Several rounds of ATP-dependent interactions between DnaJ, DnaK and GrpE are required for fully efficient folding. This chain is Protein GrpE, found in Bifidobacterium animalis subsp. lactis (strain AD011).